The following is a 318-amino-acid chain: NAD(P)H-dependent D-xylose reductase (318 aa).

Catalysis depends on Tyr48, which acts as the Proton donor. A substrate-binding site is contributed by His110. Residues 165 to 166 (SN), 214 to 223 (SNFGPLSFLE), and 270 to 280 (KSTFPNTLAVN) each bind NAD(+).

The protein belongs to the aldo/keto reductase family.

The catalysed reaction is xylitol + NAD(+) = D-xylose + NADH + H(+). It catalyses the reaction xylitol + NADP(+) = D-xylose + NADPH + H(+). The protein operates within carbohydrate metabolism; D-xylose degradation. Functionally, reduces D-xylose into xylitol. Has a preference for NADPH, but can also utilize NADH as cosubstrate. The polypeptide is NAD(P)H-dependent D-xylose reductase (XYL1) (Pachysolen tannophilus (Yeast)).